Reading from the N-terminus, the 86-residue chain is Putative membrane protein insertion efficiency factor (86 aa).

It belongs to the UPF0161 family.

Its subcellular location is the cell inner membrane. Could be involved in insertion of integral membrane proteins into the membrane. This chain is Putative membrane protein insertion efficiency factor, found in Oleidesulfovibrio alaskensis (strain ATCC BAA-1058 / DSM 17464 / G20) (Desulfovibrio alaskensis).